We begin with the raw amino-acid sequence, 512 residues long: 2'-5'-oligoadenylate synthase-like protein 1 (512 aa).

2 consecutive Ubiquitin-like domains span residues 351–430 (IQVT…ISPE) and 431–507 (IQVF…EGKA).

It belongs to the 2-5A synthase family. Specifically interacts with the ligand binding domain of the thyroid receptor (TR). TRIP14 does not require the presence of thyroid hormone for its interaction. Binds MBD1.

It localises to the nucleus. The protein resides in the nucleolus. Its subcellular location is the cytoplasm. Its function is as follows. Does not have 2'-5'-OAS activity, but can bind double-stranded RNA. Displays antiviral activity via an alternative antiviral pathway independent of RNase L. The polypeptide is 2'-5'-oligoadenylate synthase-like protein 1 (Oasl) (Rattus norvegicus (Rat)).